The chain runs to 503 residues: Probable cytosol aminopeptidase (503 aa).

The Mn(2+) site is built by Lys270 and Asp275. Lys282 is a catalytic residue. Mn(2+)-binding residues include Asp293, Asp352, and Glu354. Arg356 is a catalytic residue.

The protein belongs to the peptidase M17 family. Requires Mn(2+) as cofactor.

It localises to the cytoplasm. It catalyses the reaction Release of an N-terminal amino acid, Xaa-|-Yaa-, in which Xaa is preferably Leu, but may be other amino acids including Pro although not Arg or Lys, and Yaa may be Pro. Amino acid amides and methyl esters are also readily hydrolyzed, but rates on arylamides are exceedingly low.. It carries out the reaction Release of an N-terminal amino acid, preferentially leucine, but not glutamic or aspartic acids.. Functionally, presumably involved in the processing and regular turnover of intracellular proteins. Catalyzes the removal of unsubstituted N-terminal amino acids from various peptides. This is Probable cytosol aminopeptidase from Salmonella typhi.